Here is a 367-residue protein sequence, read N- to C-terminus: Phosphoribosylaminoimidazole-succinocarboxamide synthase (367 aa).

This sequence belongs to the SAICAR synthetase family.

It carries out the reaction 5-amino-1-(5-phospho-D-ribosyl)imidazole-4-carboxylate + L-aspartate + ATP = (2S)-2-[5-amino-1-(5-phospho-beta-D-ribosyl)imidazole-4-carboxamido]succinate + ADP + phosphate + 2 H(+). It functions in the pathway purine metabolism; IMP biosynthesis via de novo pathway; 5-amino-1-(5-phospho-D-ribosyl)imidazole-4-carboxamide from 5-amino-1-(5-phospho-D-ribosyl)imidazole-4-carboxylate: step 1/2. The polypeptide is Phosphoribosylaminoimidazole-succinocarboxamide synthase (Aliivibrio salmonicida (strain LFI1238) (Vibrio salmonicida (strain LFI1238))).